A 127-amino-acid chain; its full sequence is Glycine cleavage system H protein (127 aa).

The 82-residue stretch at alanine 24–arginine 105 folds into the Lipoyl-binding domain. Lysine 65 carries the N6-lipoyllysine modification.

It belongs to the GcvH family. The glycine cleavage system is composed of four proteins: P, T, L and H. It depends on (R)-lipoate as a cofactor.

Functionally, the glycine cleavage system catalyzes the degradation of glycine. The H protein shuttles the methylamine group of glycine from the P protein to the T protein. This is Glycine cleavage system H protein from Chlorobium limicola (strain DSM 245 / NBRC 103803 / 6330).